The following is a 198-amino-acid chain: Cyclin-dependent kinase inhibitor 1B (198 aa).

Over residues 1-12 the composition is skewed to polar residues; that stretch reads MSNVRVSNGSPT. Positions 1-30 are disordered; it reads MSNVRVSNGSPTSERRDAKQAEYPKPSACR. Position 10 is a phosphoserine; by UHMK1 (serine 10). The span at 13 to 22 shows a compositional bias: basic and acidic residues; sequence SERRDAKQAE. The segment at 51-91 is interaction with CDK2; that stretch reads DMEEASQNKWNFDFQNHKPLEGKYEWQEVEKGSLPEFYYRP. Residue tyrosine 74 is modified to Phosphotyrosine; by SRC. The interval 87-198 is disordered; it reads FYYRPPRPPK…KKPGLRRRQT (112 aa). Tyrosine 88 bears the Phosphotyrosine; by ABL, LYN and SRC mark. Tyrosine 89 bears the Phosphotyrosine mark. A compositionally biased stretch (polar residues) spans 104–113; that stretch reads QESQDVSGTR. Basic and acidic residues predominate over residues 126 to 137; that stretch reads EDTHLVDQKTDA. The Nuclear localization signal motif lies at 153 to 169; that stretch reads KRPATDDSSPQNKRANR. A Phosphothreonine; by CaMK1, PKB/AKT1 and PIM1 modification is found at threonine 157. Position 170 is a phosphothreonine (threonine 170). A compositionally biased stretch (polar residues) spans 175-186; it reads SDGSPNAGSVEQ. Position 187 is a phosphothreonine; by PKB/AKT1, CDK1 and CDK2 (threonine 187). Threonine 198 is subject to Phosphothreonine; by CaMK1, PKB/AKT1, RPS6KA1, RPS6KA3 and PIM1.

The protein belongs to the CDI family. As to quaternary structure, forms a ternary complex composed of CCNE1, CDK2 and CDKN1B. Interacts directly with CCNE1; the interaction is inhibited by CDK2-dependent phosphorylation on Thr-187. Interacts with COPS5, subunit of the COP9 signalosome complex; the interaction leads to CDKN1B degradation. Interacts with NUP50; the interaction leads to nuclear import and degradation of phosphorylated CDKN1B. Interacts with CCND1 and SNX6. Interacts (Thr-198-phosphorylated form) with 14-3-3 proteins, binds strongly YWHAQ, weakly YWHAE and YWHAH, but not YWHAB nor YWHAZ; the interaction with YWHAQ results in translocation to the cytoplasm. Interacts with AKT1 and LYN; the interactions lead to cytoplasmic mislocation, phosphorylation of CDKN1B and inhibition of cell cycle arrest. Forms a ternary complex with CCNA2 and CDK2; CDKN1B inhibits the kinase activity of CDK2 through conformational rearrangements. Interacts (unphosphorylated form) with CDK2. Forms a complex with CDK2 and SPDYA, but does not directly interact with SPDYA. Forms a ternary complex composed of cyclin D, CDK4 and CDKN1B. Interacts (phosphorylated on Tyr-88 and Tyr-89) with CDK4; the interaction is required for cyclin D and CDK4 complex assembly, induces nuclear translocation and activates the CDK4 kinase activity. Interacts with GRB2. Interacts with PIM1. Identified in a complex with SKP1, SKP2 and CKS1B. Interacts with UHMK1; the interaction leads to cytoplasmic mislocation, phosphorylation of CDKN1B and inhibition of cell cycle arrest. Also interacts with CDK1. Dephosphorylated on Thr-187 by PPM1H, leading to CDKN1B stability. Post-translationally, phosphorylated; phosphorylation occurs on serine, threonine and tyrosine residues. Phosphorylation on Ser-10 is the major site of phosphorylation in resting cells, takes place at the G(0)-G(1) phase and leads to protein stability. Phosphorylation on other sites is greatly enhanced by mitogens, growth factors, cMYC and in certain cancer cell lines. The phosphorylated form found in the cytoplasm is inactivate. Phosphorylation on Thr-198 is required for interaction with 14-3-3 proteins. Phosphorylation on Thr-187, by CDK1 and CDK2 leads to protein ubiquitination and proteasomal degradation. Tyrosine phosphorylation promotes this process. Phosphorylation by PKB/AKT1 can be suppressed by LY294002, an inhibitor of the catalytic subunit of PI3K. Phosphorylation on Tyr-88 and Tyr-89 has no effect on binding CDK2, but is required for binding CDK4. Dephosphorylated on tyrosine residues by G-CSF. Dephosphorylated on Thr-187 by PPM1H, leading to CDKN1B stability. In terms of processing, ubiquitinated; in the cytoplasm by the KPC complex (composed of RNF123/KPC1 and UBAC1/KPC2) and, in the nucleus, by SCF(SKP2). The latter requires prior phosphorylation on Thr-187. Ubiquitinated; by a TRIM21-containing SCF(SKP2)-like complex; leads to its degradation. Subject to degradation in the lysosome. Interaction with SNX6 promotes lysosomal degradation.

It is found in the nucleus. The protein resides in the cytoplasm. It localises to the endosome. Important regulator of cell cycle progression. Inhibits the kinase activity of CDK2 bound to cyclin A, but has little inhibitory activity on CDK2 bound to SPDYA. Involved in G1 arrest. Potent inhibitor of cyclin E- and cyclin A-CDK2 complexes. Forms a complex with cyclin type D-CDK4 complexes and is involved in the assembly, stability, and modulation of CCND1-CDK4 complex activation. Acts either as an inhibitor or an activator of cyclin type D-CDK4 complexes depending on its phosphorylation state and/or stoichometry. In Canis lupus familiaris (Dog), this protein is Cyclin-dependent kinase inhibitor 1B (CDKN1B).